The primary structure comprises 160 residues: Ribosomal RNA large subunit methyltransferase H (160 aa).

S-adenosyl-L-methionine-binding positions include Leu77, Gly109, and 128-133 (FSRMTF).

It belongs to the RNA methyltransferase RlmH family. As to quaternary structure, homodimer.

The protein localises to the cytoplasm. The catalysed reaction is pseudouridine(1915) in 23S rRNA + S-adenosyl-L-methionine = N(3)-methylpseudouridine(1915) in 23S rRNA + S-adenosyl-L-homocysteine + H(+). Functionally, specifically methylates the pseudouridine at position 1915 (m3Psi1915) in 23S rRNA. The sequence is that of Ribosomal RNA large subunit methyltransferase H from Pelotomaculum thermopropionicum (strain DSM 13744 / JCM 10971 / SI).